Here is a 397-residue protein sequence, read N- to C-terminus: Tetratricopeptide repeat protein 4 homolog (397 aa).

TPR repeat units follow at residues 90 to 125, 130 to 163, and 164 to 197; these read AETF…KCND, SIYL…NPLN, and MKAY…EPTN.

The protein belongs to the TTC4 family.

The sequence is that of Tetratricopeptide repeat protein 4 homolog (ttc4) from Dictyostelium discoideum (Social amoeba).